The sequence spans 537 residues: Extracellular exo-inulinase (537 aa).

The N-terminal stretch at 1 to 19 is a signal peptide; the sequence is MAPLSKALSVFMLMGITYA. Residues asparagine 40 and aspartate 41 each contribute to the beta-D-fructose site. The active-site Nucleophile is aspartate 41. The N-linked (GlcNAc...) asparagine glycan is linked to asparagine 49. Residues glutamine 57 and tryptophan 65 each coordinate beta-D-fructose. An N-linked (GlcNAc...) asparagine glycan is attached at asparagine 67. A beta-D-fructose-binding site is contributed by serine 103. N-linked (GlcNAc...) asparagine glycans are attached at residues asparagine 111 and asparagine 112. The beta-D-fructose site is built by arginine 188, aspartate 189, and glutamate 241. Glutamate 241 functions as the Proton donor/acceptor in the catalytic mechanism. N-linked (GlcNAc...) asparagine glycans are attached at residues asparagine 254 and asparagine 300. Tryptophan 335 is a binding site for beta-D-fructose. N-linked (GlcNAc...) asparagine glycans are attached at residues asparagine 398 and asparagine 430.

The protein belongs to the glycosyl hydrolase 32 family.

It is found in the secreted. The catalysed reaction is Hydrolysis of terminal, non-reducing (2-&gt;1)- and (2-&gt;6)-linked beta-D-fructofuranose residues in fructans.. In terms of biological role, exo-inulinase involved in utilization of the plant storage polymer inulin, consisting of fructooligosaccharides with a degree of polymerization (DP) value from 2 to 60. Splits off terminal fructose units successively from the non-reducing end of the inulin molecule, and also hydrolyzes levan, stachyose and raffinose. Hydrolyzes both beta-2,1- as well as beta-2,6-fructosyl linkages in fructooligosaccharides. The sequence is that of Extracellular exo-inulinase from Aspergillus awamori (Black koji mold).